The following is a 463-amino-acid chain: Bifunctional protein HldE (463 aa).

The ribokinase stretch occupies residues 1–313 (MTGPMAVRTD…RALAALPDTD (313 aa)). Asp-258 is an active-site residue. The tract at residues 331–463 (AAGGCFDLLH…LLARAAEGAR (133 aa)) is cytidylyltransferase.

The protein in the N-terminal section; belongs to the carbohydrate kinase PfkB family. This sequence in the C-terminal section; belongs to the cytidylyltransferase family. As to quaternary structure, homodimer.

It catalyses the reaction D-glycero-beta-D-manno-heptose 7-phosphate + ATP = D-glycero-beta-D-manno-heptose 1,7-bisphosphate + ADP + H(+). The enzyme catalyses D-glycero-beta-D-manno-heptose 1-phosphate + ATP + H(+) = ADP-D-glycero-beta-D-manno-heptose + diphosphate. The protein operates within nucleotide-sugar biosynthesis; ADP-L-glycero-beta-D-manno-heptose biosynthesis; ADP-L-glycero-beta-D-manno-heptose from D-glycero-beta-D-manno-heptose 7-phosphate: step 1/4. Its pathway is nucleotide-sugar biosynthesis; ADP-L-glycero-beta-D-manno-heptose biosynthesis; ADP-L-glycero-beta-D-manno-heptose from D-glycero-beta-D-manno-heptose 7-phosphate: step 3/4. Functionally, catalyzes the phosphorylation of D-glycero-D-manno-heptose 7-phosphate at the C-1 position to selectively form D-glycero-beta-D-manno-heptose-1,7-bisphosphate. Its function is as follows. Catalyzes the ADP transfer from ATP to D-glycero-beta-D-manno-heptose 1-phosphate, yielding ADP-D-glycero-beta-D-manno-heptose. The chain is Bifunctional protein HldE from Streptomyces coelicolor (strain ATCC BAA-471 / A3(2) / M145).